We begin with the raw amino-acid sequence, 142 residues long: Large ribosomal subunit protein uL13 (142 aa).

Belongs to the universal ribosomal protein uL13 family. In terms of assembly, part of the 50S ribosomal subunit.

In terms of biological role, this protein is one of the early assembly proteins of the 50S ribosomal subunit, although it is not seen to bind rRNA by itself. It is important during the early stages of 50S assembly. In Photorhabdus laumondii subsp. laumondii (strain DSM 15139 / CIP 105565 / TT01) (Photorhabdus luminescens subsp. laumondii), this protein is Large ribosomal subunit protein uL13.